The following is a 208-amino-acid chain: Fibroblast growth factor-binding protein 2 (208 aa).

Residues 1–19 (MKRVALLFLVVICGMGGLG) form the signal peptide. 3 disulfides stabilise this stretch: Cys43/Cys59, Cys68/Cys102, and Cys77/Cys113. The tract at residues 130–181 (EPEDGANRDKSSQKTSASVRGAGKSSVKKTGKPAVLPRIKPTQHGQGSENET) is disordered. Residues Cys191 and Cys199 are joined by a disulfide bond.

Belongs to the fibroblast growth factor-binding protein family.

It is found in the secreted. The protein localises to the extracellular space. The polypeptide is Fibroblast growth factor-binding protein 2 (FGFBP2) (Gallus gallus (Chicken)).